A 208-amino-acid polypeptide reads, in one-letter code: Thymidylate kinase (208 aa).

10 to 17 (GPEGSGKT) lines the ATP pocket.

The protein belongs to the thymidylate kinase family.

The enzyme catalyses dTMP + ATP = dTDP + ADP. Phosphorylation of dTMP to form dTDP in both de novo and salvage pathways of dTTP synthesis. The sequence is that of Thymidylate kinase from Bacillus cereus (strain ATCC 10987 / NRS 248).